Reading from the N-terminus, the 265-residue chain is 4-hydroxy-tetrahydrodipicolinate reductase (265 aa).

NAD(+) is bound by residues 7–12 (GASGRM) and aspartate 33. NADP(+) is bound at residue arginine 34. Residues 96-98 (GTT) and 120-123 (AANM) each bind NAD(+). The active-site Proton donor/acceptor is the histidine 153. Histidine 154 serves as a coordination point for (S)-2,3,4,5-tetrahydrodipicolinate. The active-site Proton donor is the lysine 157. 163-164 (GT) contributes to the (S)-2,3,4,5-tetrahydrodipicolinate binding site.

The protein belongs to the DapB family.

It localises to the cytoplasm. It carries out the reaction (S)-2,3,4,5-tetrahydrodipicolinate + NAD(+) + H2O = (2S,4S)-4-hydroxy-2,3,4,5-tetrahydrodipicolinate + NADH + H(+). It catalyses the reaction (S)-2,3,4,5-tetrahydrodipicolinate + NADP(+) + H2O = (2S,4S)-4-hydroxy-2,3,4,5-tetrahydrodipicolinate + NADPH + H(+). It functions in the pathway amino-acid biosynthesis; L-lysine biosynthesis via DAP pathway; (S)-tetrahydrodipicolinate from L-aspartate: step 4/4. Its function is as follows. Catalyzes the conversion of 4-hydroxy-tetrahydrodipicolinate (HTPA) to tetrahydrodipicolinate. This Burkholderia ambifaria (strain ATCC BAA-244 / DSM 16087 / CCUG 44356 / LMG 19182 / AMMD) (Burkholderia cepacia (strain AMMD)) protein is 4-hydroxy-tetrahydrodipicolinate reductase.